A 73-amino-acid polypeptide reads, in one-letter code: Ubiquitin-like modifier HUB1 (73 aa).

In terms of domain architecture, Ubiquitin-like spans 1 to 73; sequence MIEVVVNDRL…DQTNLELYYL (73 aa).

Its function is as follows. Forms conjugate with SPH1 and HBT1. Involved in morphogenesis. The chain is Ubiquitin-like modifier HUB1 (HUB1) from Saccharomyces cerevisiae (strain ATCC 204508 / S288c) (Baker's yeast).